Consider the following 203-residue polypeptide: Urease accessory protein UreE (203 aa).

Residues 170–190 show a composition bias toward basic and acidic residues; sequence EHHGHSHSRSHDHDHDHDHQH. The disordered stretch occupies residues 170-203; sequence EHHGHSHSRSHDHDHDHDHQHGPSCSHGHHHGHR.

It belongs to the UreE family.

Its subcellular location is the cytoplasm. Functionally, involved in urease metallocenter assembly. Binds nickel. Probably functions as a nickel donor during metallocenter assembly. The protein is Urease accessory protein UreE of Burkholderia pseudomallei (strain 1710b).